Consider the following 35-residue polypeptide: Flavodoxin (35 aa).

The Flavodoxin-like domain maps to 4–35; sequence IGLFYGTZTGKTESVAEIIDEFGDEVVTLDID.

It belongs to the flavodoxin family. FMN serves as cofactor.

Functionally, low-potential electron donor to a number of redox enzymes. The polypeptide is Flavodoxin (Nostoc sp. (strain MAC)).